Here is a 358-residue protein sequence, read N- to C-terminus: Probable protein phosphatase 2C 34 (358 aa).

The 288-residue stretch at 62-349 (LASVFSRRGE…DDISAVCLFF (288 aa)) folds into the PPM-type phosphatase domain. Mn(2+) is bound by residues Asp98, Gly99, Asp294, and Asp340.

The protein belongs to the PP2C family. The cofactor is Mg(2+). It depends on Mn(2+) as a cofactor.

The enzyme catalyses O-phospho-L-seryl-[protein] + H2O = L-seryl-[protein] + phosphate. The catalysed reaction is O-phospho-L-threonyl-[protein] + H2O = L-threonyl-[protein] + phosphate. In Arabidopsis thaliana (Mouse-ear cress), this protein is Probable protein phosphatase 2C 34.